The sequence spans 254 residues: Thiamine thiazole synthase (254 aa).

NAD(+)-binding positions include serine 36, 55 to 56, glycine 63, valine 127, and 154 to 156; these read EK and HVD. Residues aspartate 156 and histidine 171 each coordinate Fe cation. Residue methionine 219 participates in NAD(+) binding. Arginine 229 contacts glycine.

This sequence belongs to the THI4 family. In terms of assembly, homooctamer; tetramer of dimers. It depends on Fe(2+) as a cofactor.

It carries out the reaction hydrogen sulfide + glycine + NAD(+) = ADP-5-ethyl-4-methylthiazole-2-carboxylate + nicotinamide + 3 H2O + H(+). The protein operates within cofactor biosynthesis; thiamine diphosphate biosynthesis. Functionally, involved in the biosynthesis of the thiazole moiety of thiamine. Catalyzes the conversion of NAD and glycine to adenosine diphosphate 5-(2-hydroxyethyl)-4-methylthiazole-2-carboxylate (ADT), an adenylated thiazole intermediate, using free sulfide as a source of sulfur. In Methanoculleus marisnigri (strain ATCC 35101 / DSM 1498 / JR1), this protein is Thiamine thiazole synthase.